The sequence spans 709 residues: UV-stimulated scaffold protein A (709 aa).

Over residues Met-1–Glu-10 the composition is skewed to basic and acidic residues. The interval Met-1–Leu-20 is disordered. Residues Asp-2–Asp-145 are VHS-like. Residues Lys-165–Cys-199 are a coiled coil. 2 disordered regions span residues Ser-230–Leu-289 and Glu-386–Glu-406. The span at Pro-280–Leu-289 shows a compositional bias: acidic residues. A phosphoserine mark is found at Ser-281 and Ser-287. The segment covering Glu-386–Ala-395 has biased composition (basic and acidic residues). Residues Gly-397–Glu-406 show a composition bias toward acidic residues. Lys-414 participates in a covalent cross-link: Glycyl lysine isopeptide (Lys-Gly) (interchain with G-Cter in ubiquitin). The tract at residues Asp-469–Glu-495 is disordered. Residues Ala-477–Pro-486 show a composition bias toward low complexity. Residues Gln-564 to Ile-591 form a UVSSA-type zinc finger. Residues Cys-567, Cys-577, Cys-585, and His-588 each contribute to the Zn(2+) site. A disordered region spans residues His-588–Tyr-655. Residues Val-592–Glu-632 are compositionally biased toward basic and acidic residues. The span at Gly-646–Tyr-655 shows a compositional bias: basic residues.

It belongs to the UVSSA family. Interacts with the elongating form of RNA polymerase II (RNA pol IIo) during transcription stress. Interacts with the TFIIH complex during transcription stress. Interacts with ERCC6. Interacts with ERCC8. Interacts with USP7. Post-translationally, monoubiquitinated at Lys-414 in response to transcription stress; this promotes efficient transfer of TFIIH to stalled RNA polymerase II.

The protein localises to the chromosome. Factor involved in transcription-coupled nucleotide excision repair (TC-NER), a mechanism that rapidly removes RNA polymerase II-blocking lesions from the transcribed strand of active genes. Acts as a key adapter that promotes recruitment of factors involved in TC-NER. Facilitates the ubiquitination of the elongating form of RNA polymerase II (RNA pol IIo) at DNA damage sites, thereby promoting RNA pol IIo backtracking and access by the TC-NER machinery to lesion sites. Also promotes stabilization of ERCC6/CSB by recruiting deubiquitinating enzyme USP7 to TC-NER complexes, preventing UV-induced degradation of ERCC6 by the proteasome. Mediates the recruitment of the TFIIH complex and other factors that are required for nucleotide excision repair to RNA polymerase II. Also required to inactivate stalled RNA polymerase II by blocking the access of TCEA1/TFIIS, thereby preventing reactivation of RNA polymerase II. Not involved in processing oxidative damage. This is UV-stimulated scaffold protein A from Homo sapiens (Human).